The following is a 2174-amino-acid chain: Spectinabilin polyketide synthase system protein NorB (2174 aa).

The region spanning 34–459 is the Ketosynthase family 3 (KS3) domain; that stretch reads REPVAVVAMG…GTNAHVILEQ (426 aa). Catalysis depends on for beta-ketoacyl synthase activity residues C206, H341, and H381. The Malonyl-CoA:ACP transacylase (MAT) domain maps to 567–888; it reads FLFSGQGSQR…AAVSRAFVQG (322 aa). The N-terminal hotdog fold stretch occupies residues 938–1060; sequence HPLLGACLEL…GQLAPEAAAP (123 aa). The PKS/mFAS DH domain occupies 938–1212; that stretch reads HPLLGACLEL…TRPITAGQLR (275 aa). The active-site Proton acceptor; for dehydratase activity is H970. A disordered region spans residues 1056–1075; that stretch reads EAAAPPAAPGEDWPPPGAEP. The span at 1061-1074 shows a compositional bias: pro residues; it reads PAAPGEDWPPPGAE. A C-terminal hotdog fold region spans residues 1073–1212; that stretch reads AEPVPLEGFY…TRPITAGQLR (140 aa). D1134 acts as the Proton donor; for dehydratase activity in catalysis. Positions 1424–1726 constitute an Enoyl reductase (ER) domain; sequence GTVDDLVLAP…QARNVGKLVL (303 aa). In terms of domain architecture, Ketoreductase (KR) spans 1736-1915; the sequence is GTILVTGGYG…ATALAWGMWA (180 aa). Residues 2017–2092 enclose the Carrier domain; the sequence is PAVRELVRGQ…ALTDAIEARL (76 aa). Position 2052 is an O-(pantetheine 4'-phosphoryl)serine (S2052).

In terms of assembly, the spectinabilin polyketide synthase complex is composed of 4 proteins, NorA, NorA', NorB and NorC. The complex comprises 6 modules with a total of 28 catalytic domains catalyzing 7 chain elongations. NorA comprises one module, NorA' two modules, NorB one module and NorC two modules. The cofactor is pantetheine 4'-phosphate.

It carries out the reaction 4-nitrobenzoyl-CoA + 6 (S)-methylmalonyl-CoA + malonyl-CoA + 6 NADPH + 12 H(+) = demethyldeoxyspectinabilin + 7 CO2 + 6 NADP(+) + 8 CoA + 5 H2O. It functions in the pathway antibiotic biosynthesis. The protein operates within polyketide biosynthesis. Its function is as follows. Component of a type I modular polyketide synthase (PKS) that generates the backbone of the antibiotic spectinabilin (also known as neoaureothin), a nitroaryl-substituted polyketide metabolite. This PKS system accepts the unusual starter unit 4-nitrobenzoyl-CoA and extends it by 6 molecules of (S)-methylmalonyl-CoA and a single molecule of malonyl-CoA. The protein is Spectinabilin polyketide synthase system protein NorB of Streptomyces orinoci (Streptoverticillium orinoci).